Reading from the N-terminus, the 365-residue chain is S-adenosylmethionine:tRNA ribosyltransferase-isomerase (365 aa).

This sequence belongs to the QueA family. In terms of assembly, monomer.

The protein localises to the cytoplasm. It carries out the reaction 7-aminomethyl-7-carbaguanosine(34) in tRNA + S-adenosyl-L-methionine = epoxyqueuosine(34) in tRNA + adenine + L-methionine + 2 H(+). Its pathway is tRNA modification; tRNA-queuosine biosynthesis. Functionally, transfers and isomerizes the ribose moiety from AdoMet to the 7-aminomethyl group of 7-deazaguanine (preQ1-tRNA) to give epoxyqueuosine (oQ-tRNA). This Rickettsia peacockii (strain Rustic) protein is S-adenosylmethionine:tRNA ribosyltransferase-isomerase.